Consider the following 175-residue polypeptide: ATP synthase subunit b (175 aa).

A helical membrane pass occupies residues 20-40 (LIFWTAVTFVIVLLILKQLAW).

Belongs to the ATPase B chain family. As to quaternary structure, F-type ATPases have 2 components, F(1) - the catalytic core - and F(0) - the membrane proton channel. F(1) has five subunits: alpha(3), beta(3), gamma(1), delta(1), epsilon(1). F(0) has four main subunits: a(1), b(2) and c(10-14). The alpha and beta chains form an alternating ring which encloses part of the gamma chain. F(1) is attached to F(0) by a central stalk formed by the gamma and epsilon chains, while a peripheral stalk is formed by the delta and b chains.

The protein resides in the cell inner membrane. In terms of biological role, f(1)F(0) ATP synthase produces ATP from ADP in the presence of a proton or sodium gradient. F-type ATPases consist of two structural domains, F(1) containing the extramembraneous catalytic core and F(0) containing the membrane proton channel, linked together by a central stalk and a peripheral stalk. During catalysis, ATP synthesis in the catalytic domain of F(1) is coupled via a rotary mechanism of the central stalk subunits to proton translocation. Component of the F(0) channel, it forms part of the peripheral stalk, linking F(1) to F(0). The sequence is that of ATP synthase subunit b from Chlorobium limicola (strain DSM 245 / NBRC 103803 / 6330).